The primary structure comprises 275 residues: Large ribosomal subunit protein uL2 (275 aa).

2 disordered regions span residues 1-55 (MGIR…RHRG) and 218-275 (PHVR…RRRR). Positions 259–275 (TRNKKKASSRLIVRRRR) are enriched in basic residues.

It belongs to the universal ribosomal protein uL2 family. Part of the 50S ribosomal subunit. Forms a bridge to the 30S subunit in the 70S ribosome.

In terms of biological role, one of the primary rRNA binding proteins. Required for association of the 30S and 50S subunits to form the 70S ribosome, for tRNA binding and peptide bond formation. It has been suggested to have peptidyltransferase activity; this is somewhat controversial. Makes several contacts with the 16S rRNA in the 70S ribosome. The protein is Large ribosomal subunit protein uL2 of Crocosphaera subtropica (strain ATCC 51142 / BH68) (Cyanothece sp. (strain ATCC 51142)).